The primary structure comprises 188 residues: dCTP deaminase (188 aa).

Residues 111 to 116 (KSTYAR), 135 to 137 (TLE), Gln-156, Tyr-170, and Gln-180 each bind dCTP. Residue Glu-137 is the Proton donor/acceptor of the active site.

It belongs to the dCTP deaminase family. As to quaternary structure, homotrimer.

It catalyses the reaction dCTP + H2O + H(+) = dUTP + NH4(+). The protein operates within pyrimidine metabolism; dUMP biosynthesis; dUMP from dCTP (dUTP route): step 1/2. In terms of biological role, catalyzes the deamination of dCTP to dUTP. This is dCTP deaminase from Paracidovorax citrulli (strain AAC00-1) (Acidovorax citrulli).